Here is a 399-residue protein sequence, read N- to C-terminus: Ribonucleoside-diphosphate reductase small chain 1 (399 aa).

Phosphoserine occurs at positions 15, 24, and 41. 3 residues coordinate Fe cation: Asp-145, Glu-176, and His-179. Tyr-183 is a catalytic residue. Fe cation-binding residues include Glu-239, Glu-273, and His-276.

The protein belongs to the ribonucleoside diphosphate reductase small chain family. As to quaternary structure, heterotetramer of two large (R1) and two small (R2) subunits. S.cerevisiae has two different R1 subunits (RNR1 and RNR3) and two different R2 subunits (RNR2 and RNR4). The functional form of the small subunits is a RNR2-RNR4 heterodimer, where RNR2 provides the iron-radical center and RNR4 is required for proper folding of RNR2 and assembly with the large subunits. Under normal growth conditions, the active form of the large subunits is a homodimer of the constitutively expressed RNR1. In damaged cells or cells arrested for DNA synthesis, the reductase consists of multiple species because of the association of the small subunits (RNR2-RNR4) with either the RNR1 homodimer or a heterodimer of RNR1 and the damage-inducible RNR3. Interacts with DIF1. It depends on Fe cation as a cofactor.

Its subcellular location is the nucleus. It carries out the reaction a 2'-deoxyribonucleoside 5'-diphosphate + [thioredoxin]-disulfide + H2O = a ribonucleoside 5'-diphosphate + [thioredoxin]-dithiol. Provides the precursors necessary for DNA synthesis. Catalyzes the biosynthesis of deoxyribonucleotides from the corresponding ribonucleotides. RNR2 provides the diiron-tyrosyl radical center. In Saccharomyces cerevisiae (strain ATCC 204508 / S288c) (Baker's yeast), this protein is Ribonucleoside-diphosphate reductase small chain 1 (RNR2).